Consider the following 946-residue polypeptide: Isoleucine--tRNA ligase (946 aa).

Positions 58 to 68 match the 'HIGH' region motif; it reads PYANGSIHIGH. Glu568 contributes to the L-isoleucyl-5'-AMP binding site. The 'KMSKS' region motif lies at 609–613; the sequence is KMSKS. Lys612 is an ATP binding site. Cys908, Cys911, Cys928, and Cys931 together coordinate Zn(2+).

The protein belongs to the class-I aminoacyl-tRNA synthetase family. IleS type 1 subfamily. Monomer. It depends on Zn(2+) as a cofactor.

It is found in the cytoplasm. The enzyme catalyses tRNA(Ile) + L-isoleucine + ATP = L-isoleucyl-tRNA(Ile) + AMP + diphosphate. Its function is as follows. Catalyzes the attachment of isoleucine to tRNA(Ile). As IleRS can inadvertently accommodate and process structurally similar amino acids such as valine, to avoid such errors it has two additional distinct tRNA(Ile)-dependent editing activities. One activity is designated as 'pretransfer' editing and involves the hydrolysis of activated Val-AMP. The other activity is designated 'posttransfer' editing and involves deacylation of mischarged Val-tRNA(Ile). The sequence is that of Isoleucine--tRNA ligase from Chromohalobacter salexigens (strain ATCC BAA-138 / DSM 3043 / CIP 106854 / NCIMB 13768 / 1H11).